A 229-amino-acid polypeptide reads, in one-letter code: MLTWLNRNNLDFPPLEKALREPDGLLAAGGDLSADRLIKAYRHGCFPWFQEGQPILWWSPDPRTVLLPEELHISRSLGKVLRQSRYRVTFDTDFARVIKACAAPRSYANETWITGSMQDAYLELHRRGHAHSVEVWDQDELVGGLYGLAMGQLFFGESMFSRADNASKVGFATLVEHLTDWGFVLIDCQMPTQHLHSFGARSIPRQTFADYLARHLDQPTDADWLSRRV.

The protein belongs to the L/F-transferase family.

The protein localises to the cytoplasm. The enzyme catalyses N-terminal L-lysyl-[protein] + L-leucyl-tRNA(Leu) = N-terminal L-leucyl-L-lysyl-[protein] + tRNA(Leu) + H(+). It catalyses the reaction N-terminal L-arginyl-[protein] + L-leucyl-tRNA(Leu) = N-terminal L-leucyl-L-arginyl-[protein] + tRNA(Leu) + H(+). It carries out the reaction L-phenylalanyl-tRNA(Phe) + an N-terminal L-alpha-aminoacyl-[protein] = an N-terminal L-phenylalanyl-L-alpha-aminoacyl-[protein] + tRNA(Phe). Functionally, functions in the N-end rule pathway of protein degradation where it conjugates Leu, Phe and, less efficiently, Met from aminoacyl-tRNAs to the N-termini of proteins containing an N-terminal arginine or lysine. The polypeptide is Leucyl/phenylalanyl-tRNA--protein transferase (Pseudomonas syringae pv. tomato (strain ATCC BAA-871 / DC3000)).